A 201-amino-acid polypeptide reads, in one-letter code: Holliday junction resolvase RecU (201 aa).

Mg(2+) is bound by residues T85, D87, E100, and Q119.

It belongs to the RecU family. It depends on Mg(2+) as a cofactor.

It is found in the cytoplasm. The catalysed reaction is Endonucleolytic cleavage at a junction such as a reciprocal single-stranded crossover between two homologous DNA duplexes (Holliday junction).. In terms of biological role, endonuclease that resolves Holliday junction intermediates in genetic recombination. Cleaves mobile four-strand junctions by introducing symmetrical nicks in paired strands. Promotes annealing of linear ssDNA with homologous dsDNA. Required for DNA repair, homologous recombination and chromosome segregation. This chain is Holliday junction resolvase RecU, found in Geobacillus sp. (strain WCH70).